Reading from the N-terminus, the 1943-residue chain is Trichohyalin (1943 aa).

The tract at residues 1 to 91 (MSPLLRSICD…AQACYYALGQ (91 aa)) is S-100-like. 2 EF-hand domains span residues 23-48 (CDGAALTKKDLKNLLEREFGAVLRRP) and 49-84 (HDPKTVDLILELLDLDSNGRVDFNEFLLFIFKVAQA). Ca(2+)-binding residues include D32, D62, D64, N66, R68, and E73. Disordered stretches follow at residues 110–164 (LQDR…LEQR), 186–209 (RRAEEEQLQSCKGHETEEFPDEEQ), and 222–274 (GREE…LQEE). Residues 197–209 (KGHETEEFPDEEQ) show a composition bias toward basic and acidic residues. The 1-1; approximate repeat unit spans residues 314–326 (RREQQEERREQQE). The segment at 314–377 (RREQQEERRE…QEEERREQQL (64 aa)) is 5 X 13 AA tandem repeats of R-R-E-Q-E-E-E-R-R-E-Q-Q-L. The stretch at 327–339 (RREQQEERREQQL) is one 1-2; approximate repeat. Residues 340-351 (RREQEERREQQL) form a 1-3; approximate repeat. 10 consecutive repeat copies span residues 352 to 364 (RREQEEERREQQL), 365 to 377 (RREQEEERREQQL), 378 to 383 (RREQQL), 384 to 389 (RREQQL), 390 to 395 (RREQQL), 396 to 401 (RREQQL), 402 to 407 (RREQQL), 408 to 413 (RREQQL), 414 to 419 (RREQQL), and 420 to 425 (RREQQL). The interval 378–425 (RREQQLRREQQLRREQQLRREQQLRREQQLRREQQLRREQQLRREQQL) is 8 X 6 AA tandem repeats of R-R-E-Q-Q-L. Positions 425-683 (LRREQEEERH…REHEEERREQ (259 aa)) are 9 X 28 AA approximate tandem repeats. Disordered regions lie at residues 426-485 (RREQ…EERR), 509-546 (REQEERREQRLKRQEEEERLQQRLRSEQQLRREQEERR), 608-819 (ERLE…EKEQ), and 837-872 (EEQLQRRERAQQLQEEEDGLQEDQERRRSQEQRRDQ). Composition is skewed to basic and acidic residues over residues 608–684 (ERLE…REQE), 724–781 (RKQE…ERGR), 789–812 (PLREQRERQLRAEERQQREQRFLP), and 859–872 (DQERRRSQEQRRDQ). 10 repeat units span residues 906–935 (LQEEEEELQREEREKRRRQEQERQYREEEQ), 936–965 (LQQEEEQLLREEREKRRRQERERQYRKDKK), 966–995 (LQQKEEQLLGEEPEKRRRQEREKKYREEEE), 996–1025 (LQQEEEQLLREEREKRRRQEWERQYRKKDE), 1026–1055 (LQQEEEQLLREEREKRRLQERERQYREEEE), 1056–1085 (LQQEEEQLLGEERETRRRQELERQYRKEEE), 1086–1115 (LQQEEEQLLREEPEKRRRQERERQCREEEE), 1116–1145 (LQQEEEQLLREEREKRRRQELERQYREEEE), 1146–1175 (VQQEEEQLLREEPEKRRRQELERQYREEEE), and 1176–1204 (LQQEEEQLLREEQEKRRQERERQYREEEE). The 10 X 30 AA tandem repeats stretch occupies residues 906-1204 (LQEEEEELQR…RERQYREEEE (299 aa)). Residues 950-992 (KRRRQERERQYRKDKKLQQKEEQLLGEEPEKRRRQEREKKYRE) show a composition bias toward basic and acidic residues. Disordered stretches follow at residues 950 to 1000 (KRRR…QQEE), 1046 to 1120 (RERQ…QQEE), 1137 to 1162 (ERQYREEEEVQQEEEQLLREEPEKRR), 1193 to 1371 (QERE…RHQE), 1404 to 1435 (REQQLRQDRDRKFREEEQQLSRQERDRKFREE), 1492 to 1691 (QQLR…ERDR), 1757 to 1820 (PERE…RDGK), 1834 to 1864 (EQRLRQERDRQYRAEEQFATQEKSRREEQEL), and 1876 to 1928 (RERK…VRSS). The segment covering 1052–1064 (EEEELQQEEEQLL) has biased composition (acidic residues). Basic and acidic residues-rich tracts occupy residues 1065–1085 (GEERETRRRQELERQYRKEEE) and 1092–1111 (QLLREEPEKRRRQERERQCR). Residues 1142-1151 (EEEEVQQEEE) show a composition bias toward acidic residues. Basic and acidic residues predominate over residues 1152-1162 (QLLREEPEKRR). 2 stretches are compositionally biased toward basic and acidic residues: residues 1214 to 1263 (YRDE…DRQS) and 1274 to 1371 (QQER…RHQE). Positions 1292–1894 (HFPEEEQLER…IRRQQKEEQR (603 aa)) are 23 X 26 AA approximate tandem repeats. 3 stretches are compositionally biased toward basic and acidic residues: residues 1492 to 1524 (QQLRRQERDRKFREQELRSQEPERKFLEEEQQL), 1533 to 1673 (FLQE…REEE), and 1682 to 1691 (QQLRRQERDR). Over residues 1876–1912 (RERKLREEHIRRQQKEEQRHRQVGEIKSQEGKGHGRL) the composition is skewed to basic and acidic residues.

Belongs to the S100-fused protein family. As to quaternary structure, monomer. Post-translationally, substrate of transglutaminase. Some 200 arginines are probably converted to citrullines by peptidylarginine deimidase. As to expression, found in the hard keratinizing tissues such as the inner root sheath (IRS) of hair follicles and medulla, and in the filiform papillae of dorsal tongue epithelium.

Its function is as follows. Intermediate filament-associated protein that associates in regular arrays with keratin intermediate filaments (KIF) of the inner root sheath cells of the hair follicle and the granular layer of the epidermis. It later becomes cross-linked to KIF by isodipeptide bonds. It may serve as scaffold protein, together with involucrin, in the organization of the cell envelope or even anchor the cell envelope to the KIF network. It may be involved in its own calcium-dependent postsynthetic processing during terminal differentiation. The chain is Trichohyalin (TCHH) from Homo sapiens (Human).